The sequence spans 346 residues: MLKKPLSAVTWLCIFIVAFVSHPAWLQKLSKHKTPAQPQLKAANCCEEVKELKAQVANLSSLLSELNKKQERDWVSVVMQVMELESNSKRMESRLTDAESKYSEMNNQIDIMQLQAAQTVTQTSADAIYDCSSLYQKNYRISGVYKLPPDDFLGSPELEVFCDMETSGGGWTIIQRRKSGLVSFYRDWKQYKQGFGSIRGDFWLGNEHIHRLSRQPTRLRVEMEDWEGNLRYAEYSHFVLGNELNSYRLFLGNYTGNVGNDALQYHNNTAFSTKDKDNDNCLDKCAQLRKGGYWYNCCTDSNLNGVYYRLGEHNKHLDGITWYGWHGSTYSLKRVEMKIRPEDFKP.

Residues 1–26 form the signal peptide; the sequence is MLKKPLSAVTWLCIFIVAFVSHPAWL. Positions 39-119 form a coiled coil; sequence QLKAANCCEE…DIMQLQAAQT (81 aa). N-linked (GlcNAc...) asparagine glycosylation occurs at N58. Residues 122–343 enclose the Fibrinogen C-terminal domain; that stretch reads QTSADAIYDC…RVEMKIRPED (222 aa). A disulfide bridge connects residues C131 and C162. N253 and N267 each carry an N-linked (GlcNAc...) asparagine glycan. Residues C285 and C298 are joined by a disulfide bond.

In terms of assembly, homotetramer; disulfide-linked. In terms of tissue distribution, highly expressed in the cornea (at protein level). Expression is restricted to the stromal layer. Also detected at the junction between the corneal stromal layer and the conjuctiva. Not detected in the sclera.

It localises to the secreted. Its function is as follows. Has a role in the formation and organization of the extracellular matrix. In the eye, it functions as a mediator of dexamethasone-induced matrix deposition in the trabecular meshwork, the tissue responsible for the outflow of the ocular aqueous humor and for the maintenance of intraocular pressure. Is a negative regulator of angiogenesis in the cornea, and plays a major role in maintaining corneal avascularity and transparency. The polypeptide is Angiopoietin-related protein 7 (ANGPTL7) (Homo sapiens (Human)).